We begin with the raw amino-acid sequence, 393 residues long: Riboflavin biosynthesis protein RibBA (393 aa).

A DHBP synthase region spans residues 1–200; that stretch reads MQFDNIDSAL…IDDLIEYRKK (200 aa). Residues 27-28, aspartate 32, 139-143, and glutamate 163 each bind D-ribulose 5-phosphate; these read RE and RNGHT. Mg(2+) is bound at residue glutamate 28. Mg(2+) is bound at residue histidine 142. The tract at residues 201 to 393 is GTP cyclohydrolase II; that stretch reads LEPEIEFKAK…TKKIKMGHLI (193 aa). 249 to 253 serves as a coordination point for GTP; the sequence is RLHSA. The Zn(2+) site is built by cysteine 254, cysteine 265, and cysteine 267. GTP-binding positions include glutamine 270, 291-293, and threonine 313; that span reads EGR. Aspartate 325 (proton acceptor; for GTP cyclohydrolase activity) is an active-site residue. Residue arginine 327 is the Nucleophile; for GTP cyclohydrolase activity of the active site. Residues serine 348 and lysine 353 each coordinate GTP.

This sequence in the N-terminal section; belongs to the DHBP synthase family. In the C-terminal section; belongs to the GTP cyclohydrolase II family. Requires Mg(2+) as cofactor. It depends on Mn(2+) as a cofactor. The cofactor is Zn(2+).

The catalysed reaction is D-ribulose 5-phosphate = (2S)-2-hydroxy-3-oxobutyl phosphate + formate + H(+). The enzyme catalyses GTP + 4 H2O = 2,5-diamino-6-hydroxy-4-(5-phosphoribosylamino)-pyrimidine + formate + 2 phosphate + 3 H(+). It participates in cofactor biosynthesis; riboflavin biosynthesis; 2-hydroxy-3-oxobutyl phosphate from D-ribulose 5-phosphate: step 1/1. It functions in the pathway cofactor biosynthesis; riboflavin biosynthesis; 5-amino-6-(D-ribitylamino)uracil from GTP: step 1/4. Catalyzes the conversion of D-ribulose 5-phosphate to formate and 3,4-dihydroxy-2-butanone 4-phosphate. Functionally, catalyzes the conversion of GTP to 2,5-diamino-6-ribosylamino-4(3H)-pyrimidinone 5'-phosphate (DARP), formate and pyrophosphate. The sequence is that of Riboflavin biosynthesis protein RibBA from Staphylococcus aureus (strain Mu50 / ATCC 700699).